Here is a 418-residue protein sequence, read N- to C-terminus: L-rhamnose isomerase (418 aa).

His262, Asp294, and Asp296 together coordinate Mn(2+).

Belongs to the rhamnose isomerase family. Homotetramer. The cofactor is Mn(2+).

The protein resides in the cytoplasm. The enzyme catalyses L-rhamnopyranose = L-rhamnulose. It participates in carbohydrate degradation; L-rhamnose degradation; glycerone phosphate from L-rhamnose: step 1/3. Catalyzes the interconversion of L-rhamnose and L-rhamnulose. The chain is L-rhamnose isomerase from Yersinia pseudotuberculosis serotype IB (strain PB1/+).